The chain runs to 593 residues: ATP-dependent RNA helicase MRH4, mitochondrial (593 aa).

The N-terminal 106 residues, M1–A106, are a transit peptide targeting the mitochondrion. A compositionally biased stretch (low complexity) spans G42–G51. The segment at G42 to K63 is disordered. The segment covering T52 to K63 has biased composition (polar residues). The short motif at V130–Q137 is the Q motif element. One can recognise a Helicase ATP-binding domain in the interval I181–I399. A194–T201 serves as a coordination point for ATP. A DEAD box motif is present at residues D347–D350. Positions A433–G593 constitute a Helicase C-terminal domain.

The protein belongs to the DEAD box helicase family. MRH4 subfamily.

The protein localises to the mitochondrion. It carries out the reaction ATP + H2O = ADP + phosphate + H(+). In terms of biological role, ATP-binding RNA helicase involved in mitochondrial RNA metabolism. Required for maintenance of mitochondrial DNA. The chain is ATP-dependent RNA helicase MRH4, mitochondrial (MRH4) from Scheffersomyces stipitis (strain ATCC 58785 / CBS 6054 / NBRC 10063 / NRRL Y-11545) (Yeast).